The primary structure comprises 357 residues: Aspartate-semialdehyde dehydrogenase (357 aa).

The NADP(+) site is built by Thr-12, Gly-13, Thr-14, Val-15, Ser-37, Ser-40, Leu-84, and Asp-85. The active-site Acyl-thioester intermediate is the Cys-151. Residue Gly-183 participates in NADP(+) binding. The active-site Proton acceptor is His-247. Ser-323 is modified (phosphoserine). An NADP(+)-binding site is contributed by Asn-335.

This sequence belongs to the aspartate-semialdehyde dehydrogenase family.

The protein localises to the cytoplasm. It localises to the cytosol. Its subcellular location is the nucleus. The enzyme catalyses L-aspartate 4-semialdehyde + phosphate + NADP(+) = 4-phospho-L-aspartate + NADPH + H(+). The protein operates within amino-acid biosynthesis; L-methionine biosynthesis via de novo pathway; L-homoserine from L-aspartate: step 2/3. Its pathway is amino-acid biosynthesis; L-threonine biosynthesis; L-threonine from L-aspartate: step 2/5. Its function is as follows. Catalyzes the NADPH-dependent formation of L-aspartate 4-semialdehyde (L-ASA) by the reductive dephosphorylation of 4-phospho-L-aspartate. Mediates the second step in the biosynthesis of amino acids that derive from aspartate (the aspartate family of amino acids), including methioinine and threonine, the latter of which is a precursor to isoleucine. This Schizosaccharomyces pombe (strain 972 / ATCC 24843) (Fission yeast) protein is Aspartate-semialdehyde dehydrogenase.